Here is a 533-residue protein sequence, read N- to C-terminus: D-3-phosphoglycerate dehydrogenase (533 aa).

Residue alanine 2 is modified to N-acetylalanine. The residue at position 14 (serine 14) is a Phosphoserine. An N6-acetyllysine; alternate modification is found at lysine 21. Lysine 21 is covalently cross-linked (Glycyl lysine isopeptide (Lys-Gly) (interchain with G-Cter in SUMO1); alternate). Residue lysine 21 forms a Glycyl lysine isopeptide (Lys-Gly) (interchain with G-Cter in SUMO2); alternate linkage. Lysine 58 is subject to N6-acetyllysine. NAD(+) is bound by residues threonine 78, 155 to 156, aspartate 175, threonine 207, 234 to 236, and aspartate 260; these read RI and CAR. A Phosphothreonine modification is found at threonine 78. Residue arginine 236 is part of the active site. Residue glutamate 265 is part of the active site. Catalysis depends on histidine 283, which acts as the Proton donor. Residue 283–286 coordinates NAD(+); that stretch reads HLGA.

The protein belongs to the D-isomer specific 2-hydroxyacid dehydrogenase family. Homotetramer.

The enzyme catalyses (2R)-3-phosphoglycerate + NAD(+) = 3-phosphooxypyruvate + NADH + H(+). It carries out the reaction (R)-2-hydroxyglutarate + NAD(+) = 2-oxoglutarate + NADH + H(+). The catalysed reaction is (S)-malate + NAD(+) = oxaloacetate + NADH + H(+). The protein operates within amino-acid biosynthesis; L-serine biosynthesis; L-serine from 3-phospho-D-glycerate: step 1/3. Functionally, catalyzes the reversible oxidation of 3-phospho-D-glycerate to 3-phosphonooxypyruvate, the first step of the phosphorylated L-serine biosynthesis pathway. Also catalyzes the reversible oxidation of 2-hydroxyglutarate to 2-oxoglutarate and the reversible oxidation of (S)-malate to oxaloacetate. The sequence is that of D-3-phosphoglycerate dehydrogenase (PHGDH) from Homo sapiens (Human).